We begin with the raw amino-acid sequence, 841 residues long: MPLRRFSPGLKAQFAFGMVFLFVQPDASAADISAQQIGGVIIPQAFSQALQDGMSVPLYIHLAGSQGRQDDQRIGSAFIWLDDGQLRIRKIQLEESEDNASVSEQTRQQLTTLANAPFNEALTIPLTDNAQLDLSLRQLLLQLVVKREALGTVLRSRSEDIGQSSVNTLSSNLSYNFGVYNNQLRNGGSNTSSYLSLNNVTALREHHVVLDGSLYGIGSGQQDSELYKAMYERDFAGHRFAGGMLDTWNLQSLGPMTAISAGKIYGLSWGNQASSTIFDSSQSATPVIAFLPAAGEVHLTRDGRLLSVQNFTMGNHEVDTRGLPYGIYDVEVEVIVNGRVISKRTQRVNKLFSRGRGVGAPLAWQIWGGSFHMDRWSENGKKTRPAKESWLAGASTSGSLSTFSWAATGYGYDNQAVGETRLTLPLGGAINVNLQNMLASDSSWSNIAGISATLPGGFSSLWVNQEKTRIGNQLRRSDADNRAIGGTLNLNSLWSKLGTFSISYNDDRRYNSHYYTADYYQSVYSGTFGSLGLRAGIQRYNNGDSSANTGKYIALDLSLPLGNWFSAGMTHQNGYTMANLSARKQFDEGTIRTVGANLSRAISGDTGDDKTLSGGAYAQFDARYASGTLNVNSAADGYINTNLTANGSVGWQGKNIAASGRTDGNAGVIFDTGLENDGQISAKINGRIFPLNGKRNYLPLSPYGRYEVELQNSKNSLDSYDIVSGRKSHLTLYPGNVAVIEPEVKQMVTVSGRIRAEDGTLLANARINNHIGRTRTDENGEFVMDVDKKYPTIDFRYSGNKTCEVALELNQARGAVWVGDVVCSGLSSWAAVTQTGEENES.

Residues 1 to 29 (MPLRRFSPGLKAQFAFGMVFLFVQPDASA) form the signal peptide.

Belongs to the EcpC/MatD family.

In terms of biological role, part of the ecpRABCDE operon, which encodes the E.coli common pilus (ECP). ECP is found in both commensal and pathogenic strains and plays a dual role in early-stage biofilm development and host cell recognition. This chain is Probable outer membrane usher protein EcpC (ecpC), found in Escherichia coli O6:H1 (strain CFT073 / ATCC 700928 / UPEC).